The chain runs to 234 residues: tRNA (guanine-N(1)-)-methyltransferase (234 aa).

S-adenosyl-L-methionine-binding positions include G115 and 135–140 (VGDYIL).

Belongs to the RNA methyltransferase TrmD family. Homodimer.

Its subcellular location is the cytoplasm. The catalysed reaction is guanosine(37) in tRNA + S-adenosyl-L-methionine = N(1)-methylguanosine(37) in tRNA + S-adenosyl-L-homocysteine + H(+). Functionally, specifically methylates guanosine-37 in various tRNAs. The chain is tRNA (guanine-N(1)-)-methyltransferase from Rickettsia typhi (strain ATCC VR-144 / Wilmington).